Reading from the N-terminus, the 617-residue chain is 1-deoxy-D-xylulose-5-phosphate synthase (617 aa).

Thiamine diphosphate is bound by residues histidine 80 and 121-123; that span reads GHS. A Mg(2+)-binding site is contributed by aspartate 152. Residues 153–154, asparagine 181, tyrosine 277, and glutamate 360 each bind thiamine diphosphate; that span reads GA. Asparagine 181 is a binding site for Mg(2+).

This sequence belongs to the transketolase family. DXPS subfamily. Homodimer. Mg(2+) is required as a cofactor. It depends on thiamine diphosphate as a cofactor.

The catalysed reaction is D-glyceraldehyde 3-phosphate + pyruvate + H(+) = 1-deoxy-D-xylulose 5-phosphate + CO2. It functions in the pathway metabolic intermediate biosynthesis; 1-deoxy-D-xylulose 5-phosphate biosynthesis; 1-deoxy-D-xylulose 5-phosphate from D-glyceraldehyde 3-phosphate and pyruvate: step 1/1. Its function is as follows. Catalyzes the acyloin condensation reaction between C atoms 2 and 3 of pyruvate and glyceraldehyde 3-phosphate to yield 1-deoxy-D-xylulose-5-phosphate (DXP). The sequence is that of 1-deoxy-D-xylulose-5-phosphate synthase from Blochmanniella floridana.